We begin with the raw amino-acid sequence, 598 residues long: Inactive metallocarboxypeptidase ECM14 (598 aa).

A signal peptide spans 1-21 (MRLFTHGQVLALLAFVNTISA). Residues 22–174 (IPSFSTNSYP…QTIYESYPSP (153 aa)) constitute a propeptide that is removed on maturation. The Peptidase M14 domain maps to 202 to 522 (NYQPLSVIVP…NAVMMLGRFL (321 aa)). Zn(2+) contacts are provided by H264 and E267. Residues 264–267 (HARE), R322, and 339–340 (DR) each bind substrate. A disulfide bridge connects residues C333 and C356. N349 carries N-linked (GlcNAc...) asparagine glycosylation. Residue H396 coordinates Zn(2+). A substrate-binding site is contributed by 397-398 (SY). A disordered region spans residues 539-598 (QRPNKDDKPILNDDDDDDDADTNDDGIGRKDDSWIPDEYKGDNDRDESDGGWAFRRLRKR). Over residues 550–562 (NDDDDDDDADTND) the composition is skewed to acidic residues. A compositionally biased stretch (basic and acidic residues) spans 564 to 581 (GIGRKDDSWIPDEYKGDN).

This sequence belongs to the peptidase M14 family. Requires Zn(2+) as cofactor.

Its subcellular location is the vacuole. The protein resides in the secreted. In terms of biological role, inactive carboxypeptidase that may play a role in cell wall organization and biogenesis. The protein is Inactive metallocarboxypeptidase ECM14 (ECM14) of Ajellomyces capsulatus (strain H143) (Darling's disease fungus).